The sequence spans 121 residues: Acidic phospholipase A2 PLA-1 (121 aa).

Intrachain disulfides connect C26–C115, C28–C44, C43–C95, C49–C121, C50–C88, C57–C81, and C75–C86. Residues Y27, G29, and G31 each contribute to the Ca(2+) site. H47 is a catalytic residue. Residue D48 participates in Ca(2+) binding. Residue D89 is part of the active site.

The protein belongs to the phospholipase A2 family. Group II subfamily. D49 sub-subfamily. Requires Ca(2+) as cofactor. As to expression, expressed by the venom gland.

It localises to the secreted. It catalyses the reaction a 1,2-diacyl-sn-glycero-3-phosphocholine + H2O = a 1-acyl-sn-glycero-3-phosphocholine + a fatty acid + H(+). In terms of biological role, PLA2 catalyzes the calcium-dependent hydrolysis of the 2-acyl groups in 3-sn-phosphoglycerides. The chain is Acidic phospholipase A2 PLA-1 from Eristicophis macmahoni (Leaf-nosed viper).